The sequence spans 148 residues: Putative fusion protein (148 aa).

Residues 1-34 are disordered; sequence MDRALSTFPGDDDETNERNINHREKTSGEHGHYE. Residues 16-34 are compositionally biased toward basic and acidic residues; it reads NERNINHREKTSGEHGHYE.

This sequence belongs to the poxviruses fusion protein family. In terms of assembly, homotrimer, covalently linked.

It localises to the virion membrane. The protein is Putative fusion protein of Sheeppox virus (strain KS-1) (SPPV).